The following is a 347-amino-acid chain: Protein RecA (347 aa).

ATP is bound at residue 65-72; it reads GPESSGKT. Basic and acidic residues predominate over residues 327–336; it reads KFEPTELSRE. Residues 327–347 are disordered; that stretch reads KFEPTELSREEGDEDTLEDAM. Acidic residues predominate over residues 337–347; sequence EGDEDTLEDAM.

The protein belongs to the RecA family.

The protein resides in the cytoplasm. Functionally, can catalyze the hydrolysis of ATP in the presence of single-stranded DNA, the ATP-dependent uptake of single-stranded DNA by duplex DNA, and the ATP-dependent hybridization of homologous single-stranded DNAs. It interacts with LexA causing its activation and leading to its autocatalytic cleavage. The chain is Protein RecA from Xylella fastidiosa (strain M12).